Reading from the N-terminus, the 1943-residue chain is Cadherin-86C (1943 aa).

Residues 1-102 (MASTSSSQPE…QNQQMQHHWP (102 aa)) form a disordered region. Topologically, residues 1 to 934 (MASTSSSQPE…TDTQYKAENK (934 aa)) are extracellular. Asparagine 12 carries an N-linked (GlcNAc...) asparagine glycan. Positions 50–89 (PHHHHHHHHQHHHHHRLKQHHRHHHHHHRLQHHHHHHQQQ) are enriched in basic residues. Positions 90 to 100 (HNHQNQQMQHH) are enriched in low complexity. Cadherin domains follow at residues 238–366 (CSIT…PPVF), 367–483 (TSAP…PPYF), 484–600 (ENDH…APVF), 601–708 (EQPA…TPIF), and 709–832 (DKDL…SVKF). Asparagine 244, asparagine 419, asparagine 531, asparagine 579, asparagine 585, asparagine 612, and asparagine 645 each carry an N-linked (GlcNAc...) asparagine glycan. N-linked (GlcNAc...) asparagine glycosylation is present at asparagine 912. A helical membrane pass occupies residues 935-955 (VLFWLLILLATLVALTILILL). Residues 956 to 1943 (LCCICSWCPL…NSGGESPQYS (988 aa)) lie on the Cytoplasmic side of the membrane. Disordered regions lie at residues 1038 to 1058 (DVGR…SAEE), 1390 to 1442 (KPSR…RKRI), 1458 to 1516 (EEEE…SHNR), 1546 to 1695 (YKHS…ERNV), and 1707 to 1895 (KSSV…DDHD). The segment covering 1047 to 1058 (EGDRRHIQSAEE) has biased composition (basic and acidic residues). Residues 1426 to 1442 (IKRRRTKKRPRQPRKRI) are compositionally biased toward basic residues. Basic and acidic residues-rich tracts occupy residues 1486 to 1497 (QLSDESRKDQSR) and 1507 to 1516 (HRSESDSHNR). The span at 1552-1568 (DFDEDDTEYSIDSDGDE) shows a compositional bias: acidic residues. Over residues 1580–1602 (QENERYRRQERTYAEPENPVDRK) the composition is skewed to basic and acidic residues. Over residues 1633–1667 (KQTSSEPPHNRVSISKYESTVTENGRKLMSTSTEI) the composition is skewed to polar residues. The span at 1709-1724 (SVSGRTSTESSKSQPS) shows a compositional bias: low complexity. Basic and acidic residues-rich tracts occupy residues 1754 to 1764 (TGGRYKPEPAP), 1774 to 1793 (LLKE…ETDT), 1800 to 1810 (HSEHRFERENA), and 1837 to 1863 (KESK…ENEV). Polar residues predominate over residues 1879 to 1889 (HPTQKQLNAST).

In terms of tissue distribution, as cell intercalation proceeds, a row of stigmatophore cells surrounding the spiracular chamber show expression of Cad86C. Expression is regulated by the Abd-B cascade, requiring sal. Expressed in a broad region of the morphogenetic furrow and in clusters of cells posterior to the morphogenetic furrow. Weakly expressed in the epithelium of wing imaginal disks. In eye imaginal disk cells within the morphogenetic furrow, expression is localized to the apical region.

Its subcellular location is the cell membrane. Its function is as follows. Cadherins are calcium-dependent cell adhesion proteins. They preferentially interact with themselves in a homophilic manner in connecting cells. This is Cadherin-86C (Cad86C) from Drosophila melanogaster (Fruit fly).